Here is a 1483-residue protein sequence, read N- to C-terminus: Dynein axonemal assembly factor 1 homolog (1483 aa).

6 LRR repeats span residues 34 to 56 (RLND…EEYT), 57 to 78 (ELKC…EKLS), 79 to 100 (KLKC…DPCR), 101 to 122 (ELDT…GTNV), 125 to 146 (VLNT…SDLI), and 150 to 171 (TLSV…KIFE). Positions 185 to 223 (PVVSRLPQYRKTLILACKELTYLDSRPVFPRDRACAEAW) constitute an LRRCT domain. Disordered regions lie at residues 249-282 (SINC…TCAE), 300-327 (EEVS…GTSS), 945-986 (DSGD…HGTK), and 1167-1213 (SENE…SIDD). Positions 311-327 (DGTNSSSSLEDNDGTSS) are enriched in polar residues. Over residues 1183-1196 (TNDKESSDIMEKNG) the composition is skewed to basic and acidic residues.

It belongs to the DNAAF1 family.

Its subcellular location is the cell projection. The protein resides in the cilium. Its function is as follows. Cilium-specific protein required for cilia structures. The protein is Dynein axonemal assembly factor 1 homolog (dtr) of Drosophila melanogaster (Fruit fly).